A 268-amino-acid polypeptide reads, in one-letter code: Tryptophan synthase alpha chain (268 aa).

Active-site proton acceptor residues include E49 and D60.

This sequence belongs to the TrpA family. Tetramer of two alpha and two beta chains.

The catalysed reaction is (1S,2R)-1-C-(indol-3-yl)glycerol 3-phosphate + L-serine = D-glyceraldehyde 3-phosphate + L-tryptophan + H2O. The protein operates within amino-acid biosynthesis; L-tryptophan biosynthesis; L-tryptophan from chorismate: step 5/5. Its function is as follows. The alpha subunit is responsible for the aldol cleavage of indoleglycerol phosphate to indole and glyceraldehyde 3-phosphate. This Pseudomonas paraeruginosa (strain DSM 24068 / PA7) (Pseudomonas aeruginosa (strain PA7)) protein is Tryptophan synthase alpha chain.